A 265-amino-acid chain; its full sequence is tRNA pseudouridine synthase A (265 aa).

Asp-58 acts as the Nucleophile in catalysis. Tyr-116 is a substrate binding site.

The protein belongs to the tRNA pseudouridine synthase TruA family. Homodimer.

It catalyses the reaction uridine(38/39/40) in tRNA = pseudouridine(38/39/40) in tRNA. Its function is as follows. Formation of pseudouridine at positions 38, 39 and 40 in the anticodon stem and loop of transfer RNAs. The sequence is that of tRNA pseudouridine synthase A from Neisseria meningitidis serogroup B (strain ATCC BAA-335 / MC58).